Here is a 507-residue protein sequence, read N- to C-terminus: ATP synthase subunit alpha, chloroplastic (507 aa).

Residue 170-177 coordinates ATP; that stretch reads GDRQTGKT.

It belongs to the ATPase alpha/beta chains family. In terms of assembly, F-type ATPases have 2 components, CF(1) - the catalytic core - and CF(0) - the membrane proton channel. CF(1) has five subunits: alpha(3), beta(3), gamma(1), delta(1), epsilon(1). CF(0) has four main subunits: a, b, b' and c.

It localises to the plastid. It is found in the chloroplast thylakoid membrane. The enzyme catalyses ATP + H2O + 4 H(+)(in) = ADP + phosphate + 5 H(+)(out). Its function is as follows. Produces ATP from ADP in the presence of a proton gradient across the membrane. The alpha chain is a regulatory subunit. The polypeptide is ATP synthase subunit alpha, chloroplastic (Anthoceros angustus (Hornwort)).